A 501-amino-acid chain; its full sequence is GMP synthase [glutamine-hydrolyzing] (501 aa).

Residues 1–185 (MVLVVDYGSQ…LFNVCKLEKN (185 aa)) form the Glutamine amidotransferase type-1 domain. The active-site Nucleophile is the cysteine 75. Catalysis depends on residues histidine 159 and glutamate 161. A GMPS ATP-PPase domain is found at 186-376 (WKIGDLVEEK…LGIPDRIINR (191 aa)). 213-219 (SGGVDSS) lines the ATP pocket.

Homodimer.

It catalyses the reaction XMP + L-glutamine + ATP + H2O = GMP + L-glutamate + AMP + diphosphate + 2 H(+). Its pathway is purine metabolism; GMP biosynthesis; GMP from XMP (L-Gln route): step 1/1. Catalyzes the synthesis of GMP from XMP. This Thermotoga maritima (strain ATCC 43589 / DSM 3109 / JCM 10099 / NBRC 100826 / MSB8) protein is GMP synthase [glutamine-hydrolyzing] (guaA).